A 138-amino-acid chain; its full sequence is Transcription antitermination protein NusB (138 aa).

Belongs to the NusB family.

Involved in transcription antitermination. Required for transcription of ribosomal RNA (rRNA) genes. Binds specifically to the boxA antiterminator sequence of the ribosomal RNA (rrn) operons. This chain is Transcription antitermination protein NusB, found in Yersinia pseudotuberculosis serotype O:1b (strain IP 31758).